We begin with the raw amino-acid sequence, 141 residues long: MSSRTIMAFDFGTKSIGSAIGQEITGTASPLKAFKAQDGTPNWDDIEKQIKEWNPDLIVVGLPTDLHGKELDTITPRAKKFANRLHGRFGKQVELHDERLSTAEARADLFEFGGYKALSKGNIDCQSAVVILESWFENQWG.

Belongs to the YqgF nuclease family.

The protein resides in the cytoplasm. Its function is as follows. Could be a nuclease involved in processing of the 5'-end of pre-16S rRNA. The sequence is that of Putative pre-16S rRNA nuclease from Aliivibrio fischeri (strain ATCC 700601 / ES114) (Vibrio fischeri).